The chain runs to 636 residues: Chaperone protein HtpG (636 aa).

The segment at 1-329 (MSKEHGAAAE…TEDLPLNISR (329 aa)) is a; substrate-binding. A b region spans residues 330–550 (ETLQENALIA…DGGMTASMEK (221 aa)). Residues 551-636 (LMRVMNKDES…TGWYAEVRKL (86 aa)) form a c region.

The protein belongs to the heat shock protein 90 family. In terms of assembly, homodimer.

Its subcellular location is the cytoplasm. In terms of biological role, molecular chaperone. Has ATPase activity. In Oleidesulfovibrio alaskensis (strain ATCC BAA-1058 / DSM 17464 / G20) (Desulfovibrio alaskensis), this protein is Chaperone protein HtpG.